A 437-amino-acid chain; its full sequence is Isthmin-2 (437 aa).

The signal sequence occupies residues 1 to 25 (MLRARKGLWVLLSVLLAFWIERAIS). Residues 156 to 191 (DSGEDGTGQAEDEEDDYDYDSGEPIPSGLGKTDGDW) are disordered. Residues 165 to 176 (AEDEEDDYDYDS) show a composition bias toward acidic residues. Residues 197-242 (EEKEEEWSTWSPCSVTCGHGNQTRSRSCGDFCTSTESQSCDLVPCP) enclose the TSP type-1 domain. 3 disulfides stabilise this stretch: Cys-209–Cys-236, Cys-213–Cys-241, and Cys-224–Cys-228. A glycan (N-linked (GlcNAc...) asparagine) is linked at Asn-217. 2 N-linked (GlcNAc...) asparagine glycosylation sites follow: Asn-258 and Asn-349. Positions 262–425 (PYGTDVGSCE…LHCMENPQQD (164 aa)) constitute an AMOP domain.

This sequence belongs to the isthmin family.

It is found in the secreted. This Danio rerio (Zebrafish) protein is Isthmin-2 (ism2).